The following is a 161-amino-acid chain: Allophycocyanin beta chain (161 aa).

Asn-71 is subject to N4-methylasparagine. Cys-81 contributes to the (2R,3E)-phycocyanobilin binding site.

This sequence belongs to the phycobiliprotein family. Heterodimer of an alpha and a beta chain. Post-translationally, contains one covalently linked phycocyanobilin chromophore.

It is found in the cellular thylakoid membrane. In terms of biological role, light-harvesting photosynthetic bile pigment-protein from the phycobiliprotein complex. Allophycocyanin has a maximum absorption at approximately 650 nanometers. The chain is Allophycocyanin beta chain (apcB) from Synechococcus sp. (strain ATCC 27144 / PCC 6301 / SAUG 1402/1) (Anacystis nidulans).